Reading from the N-terminus, the 862-residue chain is Protein SEY1 (862 aa).

At 1-747 (MVSNGHFASA…KRSAIGGMTQ (747 aa)) the chain is on the cytoplasmic side. Positions 49-306 (GFNYHLISVF…IPADGFAVYA (258 aa)) constitute a GB1/RHD3-type G domain. A GTP-binding site is contributed by 59-66 (GSQSTGKS). A coiled-coil region spans residues 481–507 (SNYTQELALYQKDLEKISAQLRKDEMR). The helical transmembrane segment at 748–768 (IPVYFYILLLALGWNEIVAVL) threads the bilayer. Topologically, residues 769–771 (RNP) are lumenal. A helical membrane pass occupies residues 772–792 (LYFFMLFLCAVGAFVTYQLNL). Residues 793–862 (WGPMIKMAEA…DDDDEDEGSW (70 aa)) are Cytoplasmic-facing. The segment at 819-862 (LEPSEAGPHAARYKNSTEEYEMSNVKAPQRTNSGDDDDEDEGSW) is disordered. Over residues 852-862 (GDDDDEDEGSW) the composition is skewed to acidic residues.

This sequence belongs to the TRAFAC class dynamin-like GTPase superfamily. GB1/RHD3 GTPase family. RHD3 subfamily.

It localises to the endoplasmic reticulum membrane. Cooperates with the reticulon proteins and tubule-shaping DP1 family proteins to generate and maintain the structure of the tubular endoplasmic reticulum network. Has GTPase activity, which is required for its function in ER organization. The chain is Protein SEY1 from Uncinocarpus reesii (strain UAMH 1704).